The chain runs to 372 residues: Chorismate synthase (372 aa).

NADP(+) is bound by residues Arg-48 and Arg-54. Residues 125–127, 238–239, Gly-278, 293–297, and Arg-319 contribute to the FMN site; these read RSS, NA, and KPTSS.

The protein belongs to the chorismate synthase family. In terms of assembly, homotetramer. The cofactor is FMNH2.

It catalyses the reaction 5-O-(1-carboxyvinyl)-3-phosphoshikimate = chorismate + phosphate. It participates in metabolic intermediate biosynthesis; chorismate biosynthesis; chorismate from D-erythrose 4-phosphate and phosphoenolpyruvate: step 7/7. Catalyzes the anti-1,4-elimination of the C-3 phosphate and the C-6 proR hydrogen from 5-enolpyruvylshikimate-3-phosphate (EPSP) to yield chorismate, which is the branch point compound that serves as the starting substrate for the three terminal pathways of aromatic amino acid biosynthesis. This reaction introduces a second double bond into the aromatic ring system. In Xylella fastidiosa (strain 9a5c), this protein is Chorismate synthase.